The sequence spans 101 residues: NADH-ubiquinone oxidoreductase chain 4L (101 aa).

The next 3 membrane-spanning stretches (helical) occupy residues 5–25 (LNCT…IFLN), 29–49 (ILVM…NLIF), and 64–84 (LLIL…LVIY).

The protein belongs to the complex I subunit 4L family.

The protein localises to the mitochondrion membrane. The enzyme catalyses a ubiquinone + NADH + 5 H(+)(in) = a ubiquinol + NAD(+) + 4 H(+)(out). Functionally, core subunit of the mitochondrial membrane respiratory chain NADH dehydrogenase (Complex I) that is believed to belong to the minimal assembly required for catalysis. Complex I functions in the transfer of electrons from NADH to the respiratory chain. The immediate electron acceptor for the enzyme is believed to be ubiquinone. This chain is NADH-ubiquinone oxidoreductase chain 4L (ND4L), found in Chondrus crispus (Carrageen Irish moss).